Consider the following 1131-residue polypeptide: MASNSRHTQSQSTGSNNRRSSTNTNTTTNKATAMAQYNSDARLLQVFEQSGESGKSFDYTRSIQVHNRAVPEQQITAYLSRIQRGGRIQPFGCVLAVEETTFRIIAYSENEEMLDLGAQSVPSMEKPQQDVLTIGTDVRTLFTAASAHSLEKAAVAQEISLMNPIWVHCKNSRKPFYAIVHRIDVGMVIDLEPLRTGDAFMSAAGAVQSQKLAVRAISRLQSLPCGDVGLLCDTVVENVRELTGYDRVMVYKFHEDEHGEVVAEIRRSDLEPYLGLHYPATDIPQASRFLFMQNRVRMICDCMATPVKVIQSEELMQPLCLVGSTPSAPHGCHAQYMANMGSIRSLLMAVIINGNDDEGGGSGRNSMKLWGLVVCHHTSPRAVPFPLRYACEFLMQALGLQLNMELQLAAQLTEKHILRTQTLLCDMLLRDAPMGIVTQSPSIKDLVKCDGAALYYGGMCWMLGVTPTEAQIKDIADWLLEHHGDSTGLSTDSLADAGYPGAASLGDAVCGMASARITSKDFLFWFRSHTAKEMKWGGAKHHPDDKDDARRMHPRSSFKAFLEVVKRRSLPWDNVEIDAIHSLQLILRCSFRDIDDSGTKTMVHSRLNYLRLQGIDELSSVASEMVRLIETATAPILAVDYNGLVNGWNAKVAELTGLPVGEAMGMSLVQDLVFEQSVERVEKMLHNALRGEEEKNVEMMLKTFGPQKEKEAVILVVNACSSRDFTDNIVGVCFVGQDVTSQKVVMDKFIRIQGDYRSIVQSPNPLIPPIFASDEYACCSEWNAAMEKVTGWTHDEVIGKMLVGEIFGGCCRLKGQDAVTKFTIVLHQCNHGQEIEKFPFAFFDKQGKYVEALLTANKRTDADGRITGSFCFFRIASSELQHALEVQRQQEKKCFARLKELAYIRQEIKNPLYGMMFTRKLLEETDLSDDQKQFVETSAVCERQMQKVMDDMDLESLEDGYMELDTAEFILGTVIDAVVSQGMIVLREKGLQLIREIPGEVKTMRLYGDEVKIQQILADFLLNVLRFTPSPEGWVAIKVFPTLKQLGGGLHVVHLEFRITHPGLGLPAELVQDLFDRSQWATQEGVGLSMCRKLLKLMNGDVRYIRESGICYFLVNVEFPMAQREDAASIK.

Residues 1–30 (MASNSRHTQSQSTGSNNRRSSTNTNTTTNK) are disordered. Positions 9 to 29 (QSQSTGSNNRRSSTNTNTTTN) are enriched in low complexity. In terms of domain architecture, GAF spans 227 to 406 (DVGLLCDTVV…ALGLQLNMEL (180 aa)). Cys332 is a binding site for phytochromobilin. PAS domains are found at residues 621-692 (VASE…LRGE) and 755-826 (DYRS…TIVL). Residues 903 to 1123 (YIRQEIKNPL…LVNVEFPMAQ (221 aa)) enclose the Histidine kinase domain.

It belongs to the phytochrome family. Homodimer. Contains one covalently linked phytochromobilin chromophore.

Functionally, regulatory photoreceptor which exists in two forms that are reversibly interconvertible by light: the Pr form that absorbs maximally in the red region of the spectrum and the Pfr form that absorbs maximally in the far-red region. Photoconversion of Pr to Pfr induces an array of morphogenic responses, whereas reconversion of Pfr to Pr cancels the induction of those responses. Pfr controls the expression of a number of nuclear genes including those encoding the small subunit of ribulose-bisphosphate carboxylase, chlorophyll A/B binding protein, protochlorophyllide reductase, rRNA, etc. It also controls the expression of its own gene(s) in a negative feedback fashion. This chain is Phytochrome, found in Pinus sylvestris (Scotch pine).